A 448-amino-acid chain; its full sequence is Ribosomal protein uS12 methylthiotransferase RimO (448 aa).

One can recognise an MTTase N-terminal domain in the interval 7–123 (EKVSLVSLGC…IAEIIAEKKQ (117 aa)). Residues C16, C52, C86, C161, C165, and C168 each coordinate [4Fe-4S] cluster. A Radical SAM core domain is found at 147–377 (SSPHYTAYLK…MRTQARVSFK (231 aa)). One can recognise a TRAM domain in the interval 380 to 448 (RTLVDSEEDV…DYDLIGEIVD (69 aa)).

The protein belongs to the methylthiotransferase family. RimO subfamily. It depends on [4Fe-4S] cluster as a cofactor.

It localises to the cytoplasm. It catalyses the reaction L-aspartate(89)-[ribosomal protein uS12]-hydrogen + (sulfur carrier)-SH + AH2 + 2 S-adenosyl-L-methionine = 3-methylsulfanyl-L-aspartate(89)-[ribosomal protein uS12]-hydrogen + (sulfur carrier)-H + 5'-deoxyadenosine + L-methionine + A + S-adenosyl-L-homocysteine + 2 H(+). Catalyzes the methylthiolation of an aspartic acid residue of ribosomal protein uS12. This chain is Ribosomal protein uS12 methylthiotransferase RimO, found in Citrifermentans bemidjiense (strain ATCC BAA-1014 / DSM 16622 / JCM 12645 / Bem) (Geobacter bemidjiensis).